Consider the following 245-residue polypeptide: tRNA (guanine-N(7)-)-methyltransferase (245 aa).

S-adenosyl-L-methionine-binding residues include Glu71, Glu96, Asp123, and Asp146. Residue Asp146 is part of the active site. Lys150 contributes to the substrate binding site. Positions Lys152–Arg157 are interaction with RNA. Substrate contacts are provided by residues Asp182 and Thr224–Glu227.

Belongs to the class I-like SAM-binding methyltransferase superfamily. TrmB family.

It carries out the reaction guanosine(46) in tRNA + S-adenosyl-L-methionine = N(7)-methylguanosine(46) in tRNA + S-adenosyl-L-homocysteine. It participates in tRNA modification; N(7)-methylguanine-tRNA biosynthesis. In terms of biological role, catalyzes the formation of N(7)-methylguanine at position 46 (m7G46) in tRNA. This chain is tRNA (guanine-N(7)-)-methyltransferase, found in Albidiferax ferrireducens (strain ATCC BAA-621 / DSM 15236 / T118) (Rhodoferax ferrireducens).